Consider the following 546-residue polypeptide: Chaperonin GroEL (546 aa).

ATP-binding positions include 30–33, lysine 51, 87–91, glycine 415, 479–481, and aspartate 495; these read TLGP, DGTTT, and NAA. Residues 526–546 form a disordered region; sequence KEEKPDLSGAGAGMGGMGGMM. The span at 535–546 shows a compositional bias: gly residues; the sequence is AGAGMGGMGGMM.

The protein belongs to the chaperonin (HSP60) family. Forms a cylinder of 14 subunits composed of two heptameric rings stacked back-to-back. Interacts with the co-chaperonin GroES.

The protein resides in the cytoplasm. The catalysed reaction is ATP + H2O + a folded polypeptide = ADP + phosphate + an unfolded polypeptide.. Its function is as follows. Together with its co-chaperonin GroES, plays an essential role in assisting protein folding. The GroEL-GroES system forms a nano-cage that allows encapsulation of the non-native substrate proteins and provides a physical environment optimized to promote and accelerate protein folding. This is Chaperonin GroEL from Wigglesworthia glossinidia brevipalpis.